A 339-amino-acid chain; its full sequence is Biotin synthase (339 aa).

In terms of domain architecture, Radical SAM core spans 55-282 (NAVQLSTLLS…KAVVRLSAGR (228 aa)). [4Fe-4S] cluster contacts are provided by cysteine 70, cysteine 74, and cysteine 77. Positions 114, 145, 205, and 277 each coordinate [2Fe-2S] cluster.

It belongs to the radical SAM superfamily. Biotin synthase family. In terms of assembly, homodimer. It depends on [4Fe-4S] cluster as a cofactor. The cofactor is [2Fe-2S] cluster.

It catalyses the reaction (4R,5S)-dethiobiotin + (sulfur carrier)-SH + 2 reduced [2Fe-2S]-[ferredoxin] + 2 S-adenosyl-L-methionine = (sulfur carrier)-H + biotin + 2 5'-deoxyadenosine + 2 L-methionine + 2 oxidized [2Fe-2S]-[ferredoxin]. It functions in the pathway cofactor biosynthesis; biotin biosynthesis; biotin from 7,8-diaminononanoate: step 2/2. Catalyzes the conversion of dethiobiotin (DTB) to biotin by the insertion of a sulfur atom into dethiobiotin via a radical-based mechanism. The sequence is that of Biotin synthase from Burkholderia vietnamiensis (strain G4 / LMG 22486) (Burkholderia cepacia (strain R1808)).